Here is a 202-residue protein sequence, read N- to C-terminus: Small ribosomal subunit protein uS4 (202 aa).

Positions 23 to 42 are disordered; the sequence is RKNARRAYAPGQHGQARKKR. The S4 RNA-binding domain maps to 90 to 153; that stretch reads MRLDNTVFRL…RSQDLVKRNM (64 aa).

The protein belongs to the universal ribosomal protein uS4 family. Part of the 30S ribosomal subunit. Contacts protein S5. The interaction surface between S4 and S5 is involved in control of translational fidelity.

Its function is as follows. One of the primary rRNA binding proteins, it binds directly to 16S rRNA where it nucleates assembly of the body of the 30S subunit. Functionally, with S5 and S12 plays an important role in translational accuracy. In Microcystis aeruginosa (strain NIES-843 / IAM M-2473), this protein is Small ribosomal subunit protein uS4.